The sequence spans 248 residues: Gamma-interferon-inducible lysosomal thiol reductase (248 aa).

A signal peptide spans 1 to 26; sequence MSWSPILPFLSLLLLLFPLEVPRAAT. Residues 27–54 constitute a propeptide, removed in mature form; it reads ASLSQASSEGTTTCKAHDVCLLGPRPLP. Cysteines 69 and 72 form a disulfide. N-linked (GlcNAc...) asparagine glycans are attached at residues Asn92 and Asn105. A propeptide spans 231 to 248 (removed in mature form); the sequence is KPDICSSIADSPRKVCYK.

The protein belongs to the GILT family. In terms of assembly, dimer; disulfide-linked. Post-translationally, N-glycosylated. Sugar chains contain mannose-6-phosphate. Synthesized as a 35 kDa precursor which is then processed into the mature 30 kDa form via cleavage of N-terminal and C-terminal propeptides. Processing of the precursor is mediated by multiple lysosomal proteases.

The protein resides in the secreted. The protein localises to the lysosome. In terms of biological role, lysosomal thiol reductase that can reduce protein disulfide bonds. May facilitate the complete unfolding of proteins destined for lysosomal degradation. Plays an important role in antigen processing. Facilitates the generation of MHC class II-restricted epitodes from disulfide bond-containing antigen by the endocytic reduction of disulfide bonds. Also facilitates MHC class I-restricted recognition of exogenous antigens containing disulfide bonds by CD8+ T-cells or crosspresentation. The protein is Gamma-interferon-inducible lysosomal thiol reductase (Ifi30) of Mus musculus (Mouse).